A 209-amino-acid polypeptide reads, in one-letter code: Ribosomal RNA small subunit methyltransferase G (209 aa).

S-adenosyl-L-methionine-binding positions include Gly75, Leu80, 126-127 (VE), and Arg141.

It belongs to the methyltransferase superfamily. RNA methyltransferase RsmG family.

Its subcellular location is the cytoplasm. The enzyme catalyses guanosine(527) in 16S rRNA + S-adenosyl-L-methionine = N(7)-methylguanosine(527) in 16S rRNA + S-adenosyl-L-homocysteine. Its function is as follows. Specifically methylates the N7 position of guanine in position 527 of 16S rRNA. The polypeptide is Ribosomal RNA small subunit methyltransferase G (Colwellia psychrerythraea (strain 34H / ATCC BAA-681) (Vibrio psychroerythus)).